The primary structure comprises 426 residues: Bile acid CoA-transferase BaiF (426 aa).

The Nucleophile role is filled by D168.

Belongs to the CoA-transferase III family.

The enzyme catalyses lithocholoyl-CoA + cholate = choloyl-CoA + lithocholate. It carries out the reaction deoxycholoyl-CoA + cholate = choloyl-CoA + deoxycholate. It catalyses the reaction allodeoxycholoyl-CoA + cholate = allodeoxycholate + choloyl-CoA. The catalysed reaction is allocholate + deoxycholoyl-CoA = allocholoyl-CoA + deoxycholate. The enzyme catalyses allocholate + lithocholoyl-CoA = allocholoyl-CoA + lithocholate. It carries out the reaction allocholate + allodeoxycholoyl-CoA = allocholoyl-CoA + allodeoxycholate. It catalyses the reaction lithocholoyl-CoA + chenodeoxycholate = chenodeoxycholoyl-CoA + lithocholate. The catalysed reaction is ursodeoxycholate + deoxycholoyl-CoA = ursodeoxycholoyl-CoA + deoxycholate. The enzyme catalyses ursodeoxycholate + lithocholoyl-CoA = ursodeoxycholoyl-CoA + lithocholate. It carries out the reaction allodeoxycholoyl-CoA + ursodeoxycholate = ursodeoxycholoyl-CoA + allodeoxycholate. It catalyses the reaction beta-muricholate + lithocholoyl-CoA = beta-muricholoyl-CoA + lithocholate. The catalysed reaction is beta-muricholate + deoxycholoyl-CoA = beta-muricholoyl-CoA + deoxycholate. The enzyme catalyses beta-muricholate + allodeoxycholoyl-CoA = beta-muricholoyl-CoA + allodeoxycholate. It carries out the reaction choloyl-CoA + H2O = cholate + CoA + H(+). It catalyses the reaction chenodeoxycholoyl-CoA + H2O = chenodeoxycholate + CoA + H(+). It functions in the pathway lipid metabolism; bile acid biosynthesis. Functionally, functions in the bile acid 7alpha-dehydroxylation pathway, which forms secondary bile acids via the 7alpha-dehydroxylation of primary bile acids, and is carried out by intestinal anaerobic bacteria. Acts as a bile acid CoA transferase with broad bile acid substrate specificity. Catalyzes the transfer of the CoA moiety of secondary bile acid-CoA compounds to primary bile acids. Can use lithocholoyl-CoA, deoxycholoyl-CoA and allodeoxycholoyl-CoA as bile acid CoA donors and cholate, allocholate, chenodeoxycholate, ursodeoxycholate, and beta-muricholate as bile acid CoA acceptors. Also displays CoA hydrolase activity, being able to catalyze the hydrolysis of choloyl-CoA, 3-dehydrocholoyl-CoA, and chenodeoxycholoyl-CoA, releasing CoA and the corresponding free bile acid. However, this latter activity may not represent the actual activity of this enzyme, since using a transferase rather than hydrolase, the bacteria conserve the thioester bond energy, saving ATP molecules. Shows no hydrolytic activity with acetyl-CoA, isovaleryl-CoA, palmitoyl-CoA, or phenylacetyl-CoA as substrates. The chain is Bile acid CoA-transferase BaiF from Clostridium scindens (strain JCM 10418 / VPI 12708).